The sequence spans 70 residues: UPF0270 protein VP2791 (70 aa).

Belongs to the UPF0270 family.

The sequence is that of UPF0270 protein VP2791 from Vibrio parahaemolyticus serotype O3:K6 (strain RIMD 2210633).